An 81-amino-acid polypeptide reads, in one-letter code: Photosystem I iron-sulfur center (81 aa).

4Fe-4S ferredoxin-type domains follow at residues 2–31 (SHSV…MVPW) and 37–68 (GQIA…VRVY). Positions 11, 14, 17, 21, 48, 51, 54, and 58 each coordinate [4Fe-4S] cluster.

In terms of assembly, the cyanobacterial PSI reaction center is composed of one copy each of PsaA,B,C,D,E,F,I,J,K,L,M and X, and forms trimeric complexes. Requires [4Fe-4S] cluster as cofactor.

The protein localises to the cellular thylakoid membrane. The catalysed reaction is reduced [plastocyanin] + hnu + oxidized [2Fe-2S]-[ferredoxin] = oxidized [plastocyanin] + reduced [2Fe-2S]-[ferredoxin]. In terms of biological role, apoprotein for the two 4Fe-4S centers FA and FB of photosystem I (PSI); essential for photochemical activity. FB is the terminal electron acceptor of PSI, donating electrons to ferredoxin. The C-terminus interacts with PsaA/B/D and helps assemble the protein into the PSI complex. Required for binding of PsaD and PsaE to PSI. PSI is a plastocyanin/cytochrome c6-ferredoxin oxidoreductase, converting photonic excitation into a charge separation, which transfers an electron from the donor P700 chlorophyll pair to the spectroscopically characterized acceptors A0, A1, FX, FA and FB in turn. This Trichodesmium erythraeum (strain IMS101) protein is Photosystem I iron-sulfur center.